The chain runs to 217 residues: MOB kinase activator 3A (217 aa).

Zn(2+) is bound by residues Cys83, Cys88, His165, and His170.

Belongs to the MOB1/phocein family.

May regulate the activity of kinases. This chain is MOB kinase activator 3A (MOB3A), found in Homo sapiens (Human).